The primary structure comprises 515 residues: Tetratricopeptide repeat protein 8 (515 aa).

The TPR 1 repeat unit spans residues 4-37 (EMEPLLRAWSYFRRRKFQLCADLCTQMLEKSPYD). 2 disordered regions span residues 89-109 (RPGT…TQAV) and 118-137 (PITG…TMEQ). 7 TPR repeats span residues 225–258 (WWWK…QEMV), 259–291 (DTFL…FPGE), 292–325 (VTLL…DNTH), 326–359 (VEAI…GVYN), 360–393 (CQLF…AENE), 397–430 (ADVW…NNHH), and 432–464 (EAYN…APHM).

As to quaternary structure, part of BBSome complex, that contains BBS1, BBS2, BBS4, BBS5, BBS7, BBS8/TTC8, BBS9 and BBIP10. Interacts with PCM1. Interacts with CCDC28B. Interacts with PKD1. As to expression, isoform 1 is retina-specific whereas isoform 2 is ubiquitously expressed.

The protein localises to the cytoplasm. It is found in the cytoskeleton. The protein resides in the microtubule organizing center. It localises to the centrosome. Its subcellular location is the centriole. The protein localises to the cell projection. It is found in the cilium membrane. The protein resides in the centriolar satellite. It localises to the cilium. The BBSome complex is thought to function as a coat complex required for sorting of specific membrane proteins to the primary cilia. The BBSome complex is required for ciliogenesis but is dispensable for centriolar satellite function. This ciliogenic function is mediated in part by the Rab8 GDP/GTP exchange factor, which localizes to the basal body and contacts the BBSome. Rab8(GTP) enters the primary cilium and promotes extension of the ciliary membrane. Firstly the BBSome associates with the ciliary membrane and binds to RAB3IP/Rabin8, the guanosyl exchange factor (GEF) for Rab8 and then the Rab8-GTP localizes to the cilium and promotes docking and fusion of carrier vesicles to the base of the ciliary membrane. The BBSome complex, together with the LTZL1, controls SMO ciliary trafficking and contributes to the sonic hedgehog (SHH) pathway regulation. Required for proper BBSome complex assembly and its ciliary localization. This Mus musculus (Mouse) protein is Tetratricopeptide repeat protein 8 (Ttc8).